A 127-amino-acid polypeptide reads, in one-letter code: MORF4 family-associated protein 1-like 1 (127 aa).

Positions 87–118 (GEADERVSELCEKAEEKAKEIAKMAEMLVELV) form a coiled coil.

This sequence belongs to the MORF4 family-associated protein family.

The sequence is that of MORF4 family-associated protein 1-like 1 (MRFAP1L1) from Homo sapiens (Human).